A 359-amino-acid chain; its full sequence is Probable dual-specificity RNA methyltransferase RlmN (359 aa).

The active-site Proton acceptor is the glutamate 91. The 233-residue stretch at 97–329 folds into the Radical SAM core domain; it reads QHYGHSVCVT…KKNGVNCVVR (233 aa). Cysteine 104 and cysteine 340 form a disulfide bridge. 3 residues coordinate [4Fe-4S] cluster: cysteine 111, cysteine 115, and cysteine 118. Residues 163 to 164, serine 195, 218 to 220, and asparagine 296 each bind S-adenosyl-L-methionine; these read GE and SLH. Cysteine 340 serves as the catalytic S-methylcysteine intermediate.

This sequence belongs to the radical SAM superfamily. RlmN family. [4Fe-4S] cluster serves as cofactor.

The protein resides in the cytoplasm. It carries out the reaction adenosine(2503) in 23S rRNA + 2 reduced [2Fe-2S]-[ferredoxin] + 2 S-adenosyl-L-methionine = 2-methyladenosine(2503) in 23S rRNA + 5'-deoxyadenosine + L-methionine + 2 oxidized [2Fe-2S]-[ferredoxin] + S-adenosyl-L-homocysteine. It catalyses the reaction adenosine(37) in tRNA + 2 reduced [2Fe-2S]-[ferredoxin] + 2 S-adenosyl-L-methionine = 2-methyladenosine(37) in tRNA + 5'-deoxyadenosine + L-methionine + 2 oxidized [2Fe-2S]-[ferredoxin] + S-adenosyl-L-homocysteine. Specifically methylates position 2 of adenine 2503 in 23S rRNA and position 2 of adenine 37 in tRNAs. In Streptococcus pyogenes serotype M18 (strain MGAS8232), this protein is Probable dual-specificity RNA methyltransferase RlmN.